A 398-amino-acid chain; its full sequence is Dihydrolipoyllysine-residue acetyltransferase component of acetoin cleaving system (398 aa).

The 76-residue stretch at 2–77 (AVKVVMPKLG…PPGTAICYIG (76 aa)) folds into the Lipoyl-binding domain. The residue at position 43 (K43) is an N6-lipoyllysine. Residues 118–155 (KISPVARKIAEKAGLDLKQLKGTGPGGRIVKDDVTKAL) enclose the Peripheral subunit-binding (PSBD) domain. Catalysis depends on residues H371 and D375.

This sequence belongs to the 2-oxoacid dehydrogenase family. (R)-lipoate is required as a cofactor.

The catalysed reaction is N(6)-[(R)-dihydrolipoyl]-L-lysyl-[protein] + acetyl-CoA = N(6)-[(R)-S(8)-acetyldihydrolipoyl]-L-lysyl-[protein] + CoA. The protein operates within ketone degradation; acetoin degradation. This Bacillus subtilis (strain 168) protein is Dihydrolipoyllysine-residue acetyltransferase component of acetoin cleaving system (acoC).